Here is a 473-residue protein sequence, read N- to C-terminus: Mitochondrial adenyl nucleotide antiporter SLC25A24-B (473 aa).

Positions 1 to 173 (MLEQVQKFLL…RYWKHSTVLD (173 aa)) are regulatory N-terminal domain. The Mitochondrial intermembrane segment spans residues 1-197 (MLEQVQKFLL…EKKTGQWWKQ (197 aa)). EF-hand domains lie at 19 to 54 (DSQSRYEELFHKLDVNKDGKVDILELQEGLKAMGME), 55 to 88 (VGKGAEEKIVAAGDTNKDGHLDFGEFIRYLEEHE), 86 to 121 (EHEKKMKIAFTSLDKNKDGKIESAEIMNSLKVLGIK), and 122 to 157 (ISLDHADKILKSMDSDGTLTVDWNEWRDHFLFNPAD). Ca(2+) is bound by residues D32, N34, D36, K38, E43, D68, N70, D72, H74, E79, D99, N101, D103, K105, E110, D135, D137, T139, T141, and E146. Residues 159–168 (IQQIIRYWKH) are linker region. The C-terminal transmembrane transporter domain stretch occupies residues 174-473 (IGDSLTIPDE…YEKMKVQLGI (300 aa)). Solcar repeat units lie at residues 192 to 277 (GQWW…YKKL), 285 to 370 (LGTA…LKNY), and 382 to 470 (PGVL…MKVQ). The chain crosses the membrane as a helical span at residues 198–215 (LMAGGMAGAVSRTGTAPL). At 216–251 (DRLKVMMQVHGSKGNSNIITGLKQMVKEGGIRSLWR) the chain is on the mitochondrial matrix side. A helical membrane pass occupies residues 252–271 (GNGVNVIKIAPETAMKFWAY). Topologically, residues 272 to 294 (EQYKKLFTSESGKLGTAERFVAG) are mitochondrial intermembrane. The helical transmembrane segment at 295 to 308 (SLAGATAQTSIYPM) threads the bilayer. The Mitochondrial matrix segment spans residues 309–344 (EVLKTRLAVGRTGQYSGMFDCAKKIMQKEGIRAFYK). Residues 345 to 364 (GYIPNILGIIPYAGIDLAIY) traverse the membrane as a helical segment. The Mitochondrial intermembrane segment spans residues 365–387 (ETLKNYWLQNHAKDSANPGVLVL). The helical transmembrane segment at 388–405 (LGCGTASSTCGQLASYPL) threads the bilayer. The Mitochondrial matrix segment spans residues 406–444 (ALIRTRMQAQASIEGAPQLNMGGLFRKIVAKEGFLGLYR). The helical transmembrane segment at 445-464 (GIGPNFLKVLPAVSISYVVY) threads the bilayer. The Mitochondrial intermembrane portion of the chain corresponds to 465 to 473 (EKMKVQLGI).

Belongs to the mitochondrial carrier (TC 2.A.29) family. In terms of assembly, monomer.

The protein localises to the mitochondrion inner membrane. It catalyses the reaction Mg(2+)(out) + phosphate(in) + ATP(out) = Mg(2+)(in) + phosphate(out) + ATP(in). It carries out the reaction ADP(out) + phosphate(in) + H(+)(out) = ADP(in) + phosphate(out) + H(+)(in). The catalysed reaction is AMP(out) + phosphate(in) = AMP(in) + phosphate(out). The enzyme catalyses phosphate(in) + ATP(out) + 2 H(+)(out) = phosphate(out) + ATP(in) + 2 H(+)(in). It catalyses the reaction dADP(in) + ADP(out) = dADP(out) + ADP(in). It carries out the reaction Mg(2+)(in) + ADP(out) + ATP(in) + H(+)(out) = Mg(2+)(out) + ADP(in) + ATP(out) + H(+)(in). The catalysed reaction is ADP(out) + diphosphate(in) = ADP(in) + diphosphate(out). The enzyme catalyses dAMP(in) + ADP(out) + H(+)(out) = dAMP(out) + ADP(in) + H(+)(in). It catalyses the reaction 3'-AMP(in) + ADP(out) + H(+)(out) = 3'-AMP(out) + ADP(in) + H(+)(in). It carries out the reaction dAMP(out) + phosphate(in) = dAMP(in) + phosphate(out). The catalysed reaction is 3'-AMP(out) + phosphate(in) = 3'-AMP(in) + phosphate(out). The enzyme catalyses dADP(out) + phosphate(in) + H(+)(out) = dADP(in) + phosphate(out) + H(+)(in). With respect to regulation, activated by an increase in cytosolic calcium levels that induce a conformational change of the N-terminal regulatory domain, uncapping the channel and allowing transport. Inhibited by bathophenanthroline, mersalyl, p-hydroxymercuribenzoate, bromcresol purple and tannic acid. Electroneutral antiporter that mediates the transport of adenyl nucleotides through the inner mitochondrial membrane. Originally identified as an ATP-magnesium/inorganic phosphate antiporter, it also acts as a broad specificity adenyl nucleotide antiporter. By regulating the mitochondrial matrix adenyl nucleotide pool could adapt to changing cellular energetic demands and indirectly regulate adenyl nucleotide-dependent metabolic pathways. In Xenopus laevis (African clawed frog), this protein is Mitochondrial adenyl nucleotide antiporter SLC25A24-B (slc25a24-b).